The chain runs to 106 residues: Iron-sulfur cluster assembly protein CyaY (106 aa).

Belongs to the frataxin family.

Involved in iron-sulfur (Fe-S) cluster assembly. May act as a regulator of Fe-S biogenesis. The polypeptide is Iron-sulfur cluster assembly protein CyaY (Salmonella heidelberg (strain SL476)).